Consider the following 538-residue polypeptide: Cryptic outer membrane porin BglH (538 aa).

The first 25 residues, 1-25 (MFRRNLITSAILLMAPLAFSAQSLA), serve as a signal peptide directing secretion. Positions 52–82 (KDEEKKKYTPATVNRSVSTNDQGYAANPFPT) are disordered. A compositionally biased stretch (polar residues) spans 62–73 (ATVNRSVSTNDQ).

This sequence belongs to the porin LamB (TC 1.B.3) family. Homomonomer; no physical evidence of a homotrimer has been found, however conductance experiments suggest it may be a homotrimer. The monomer probably consists of 18 antiparallel beta-strands.

It is found in the cell outer membrane. Functionally, part of a cryptic operon that is poorly expressed in vivo. May be an ancestral sugar porin with a broad carbohydrate specificity; it binds aromatic beta-D-glucosides such as arbutin and salicin, but with low affinity compared to the binding of maltooligosaccharides to the LamB porin. In Escherichia coli (strain K12), this protein is Cryptic outer membrane porin BglH (bglH).